The following is a 260-amino-acid chain: Ribonuclease HII (260 aa).

The region spanning 73–260 is the RNase H type-2 domain; the sequence is LHIAGIDEAG…APVQQQLDIV (188 aa). A divalent metal cation is bound by residues aspartate 79, glutamate 80, and aspartate 171.

It belongs to the RNase HII family. Mn(2+) is required as a cofactor. The cofactor is Mg(2+).

The protein resides in the cytoplasm. The catalysed reaction is Endonucleolytic cleavage to 5'-phosphomonoester.. Endonuclease that specifically degrades the RNA of RNA-DNA hybrids. In Desulfitobacterium hafniense (strain DSM 10664 / DCB-2), this protein is Ribonuclease HII.